The following is a 333-amino-acid chain: Cytochrome f (333 aa).

Residues 1-44 form the signal peptide; sequence MRNACTRARLTRTARAMVKTLFIAIASVTFFFTSDLALPQSAAA. The heme site is built by Tyr45, Cys66, Cys69, and His70. The chain crosses the membrane as a helical span at residues 299–318; sequence VGWLIAFVALVMLAQVMLVL.

It belongs to the cytochrome f family. In terms of assembly, the 4 large subunits of the cytochrome b6-f complex are cytochrome b6, subunit IV (17 kDa polypeptide, PetD), cytochrome f and the Rieske protein, while the 4 small subunits are PetG, PetL, PetM and PetN. The complex functions as a dimer. Heme is required as a cofactor.

It is found in the cellular thylakoid membrane. In terms of biological role, component of the cytochrome b6-f complex, which mediates electron transfer between photosystem II (PSII) and photosystem I (PSI), cyclic electron flow around PSI, and state transitions. The sequence is that of Cytochrome f from Trichormus variabilis (strain ATCC 29413 / PCC 7937) (Anabaena variabilis).